A 671-amino-acid polypeptide reads, in one-letter code: MPLIHRKKPTEKPSTPPSEEVVHDEDSQKKPHESSKSHHKKSNGGGKWSCIDSCCWFIGCVCVTWWFLLFLYNAMPASFPQYVTERITGPLPDPPGVKLKKEGLKAKHPVVFIPGIVTGGLELWEGKQCADGLFRKRLWGGTFGEVYKRPLCWVEHMSLDNETGLDPAGIRVRAVSGLVAADYFAPGYFVWAVLIANLAHIGYEEKNMYMAAYDWRLSFQNTEVRDQTLSRMKSNIELMVSTNGGKKAVIVPHSMGVLYFLHFMKWVEAPAPLGGGGGPDWCAKYIKAVMNIGGPFLGVPKAVAGLFSAEAKDVAVARAIAPGFLDTDIFRLQTLQHVMRMTRTWDSTMSMLPKGGDTIWGGLDWSPEKGHTCCGKKQKNNETCGEAGENGVSKKSPVNYGRMISFGKEVAEAAPSEINNIDFRGAVKGQSIPNHTCRDVWTEYHDMGIAGIKAIAEYKVYTAGEAIDLLHYVAPKMMARGAAHFSYGIADDLDDTKYQDPKYWSNPLETKLPNAPEMEIYSLYGVGIPTERAYVYKLNQSPDSCIPFQIFTSAHEEDEDSCLKAGVYNVDGDETVPVLSAGYMCAKAWRGKTRFNPSGIKTYIREYNHSPPANLLEGRGTQSGAHVDIMGNFALIEDIMRVAAGGNGSDIGHDQVHSGIFEWSERIDLKL.

Residues 1–46 (MPLIHRKKPTEKPSTPPSEEVVHDEDSQKKPHESSKSHHKKSNGGG) are disordered. Topologically, residues 1–54 (MPLIHRKKPTEKPSTPPSEEVVHDEDSQKKPHESSKSHHKKSNGGGKWSCIDSC) are cytoplasmic. Residues 20–36 (EVVHDEDSQKKPHESSK) show a composition bias toward basic and acidic residues. Residues 55–75 (CWFIGCVCVTWWFLLFLYNAM) traverse the membrane as a helical segment. At 76-671 (PASFPQYVTE…EWSERIDLKL (596 aa)) the chain is on the lumenal side. Residue Asn161 is glycosylated (N-linked (GlcNAc...) asparagine). The active-site Acyl-ester intermediate is the Ser254. N-linked (GlcNAc...) asparagine glycosylation is found at Asn381 and Asn434. Catalysis depends on charge relay system residues Asp573 and His626. N-linked (GlcNAc...) asparagine glycosylation is present at Asn647.

This sequence belongs to the AB hydrolase superfamily. Lipase family. As to expression, ubiquitous. Highest expression in young developing seeds.

The protein localises to the membrane. It catalyses the reaction a glycerophospholipid + a 1,2-diacyl-sn-glycerol = a monoacylglycerophospholipid + a triacyl-sn-glycerol. The protein operates within glycerolipid metabolism; triacylglycerol biosynthesis. Its function is as follows. Triacylglycerol formation by an acyl-CoA independent pathway. The enzyme preferentially transfers acyl groups from the sn-2 position of a phospholipid to diacylglycerol, thus forming an sn-1-lysophospholipid. Involved in epoxy and hydroxy fatty acid accumulation in seeds. Has complementary functions with DAG1 that are essential for triacylglycerol synthesis and normal development of both seeds and pollen. The protein is Phospholipid:diacylglycerol acyltransferase 1 (PDAT1) of Arabidopsis thaliana (Mouse-ear cress).